Here is a 169-residue protein sequence, read N- to C-terminus: Probable phospholipid hydroperoxide glutathione peroxidase (169 aa).

Cysteine 43 is a catalytic residue.

Belongs to the glutathione peroxidase family. As to expression, germinating seed, apex, flower, as well as in stressed tissues.

It localises to the cytoplasm. It carries out the reaction a hydroperoxy polyunsaturated fatty acid + 2 glutathione = a hydroxy polyunsaturated fatty acid + glutathione disulfide + H2O. Its function is as follows. Protects cells and enzymes from oxidative damage, by catalyzing the reduction of hydrogen peroxide, lipid peroxides and organic hydroperoxide, by glutathione. The polypeptide is Probable phospholipid hydroperoxide glutathione peroxidase (Nicotiana sylvestris (Wood tobacco)).